Reading from the N-terminus, the 128-residue chain is Iron-sulfur cluster insertion protein ErpA (128 aa).

Cysteine 56, cysteine 120, and cysteine 122 together coordinate iron-sulfur cluster.

It belongs to the HesB/IscA family. As to quaternary structure, homodimer. It depends on iron-sulfur cluster as a cofactor.

Functionally, required for insertion of 4Fe-4S clusters for at least IspG. This is Iron-sulfur cluster insertion protein ErpA from Xanthomonas campestris pv. campestris (strain 8004).